Reading from the N-terminus, the 336-residue chain is Immune-associated nucleotide-binding protein 6 (336 aa).

The AIG1-type G domain occupies 33-241; it reads EPVKNVVLVG…FTDTMHRRIQ (209 aa). Residues 42–49 are G1; that stretch reads GRTGNGKS. Residues 42-50 and Ser-63 each bind GTP; that span reads GRTGNGKSA. Residues 69 to 73 form a G2 region; sequence GVTTR. Residues 91 to 94 are G3; that stretch reads DTPG. The G4 stretch occupies residues 161 to 164; it reads TCGD. Residues 200–202 form a G5 region; that stretch reads DNR. Asn-201 contacts GTP. Residues 237–270 adopt a coiled-coil conformation; the sequence is HRRIQEEAARVKREEKEIEEKNIADEEKAALKKQ.

It belongs to the TRAFAC class TrmE-Era-EngA-EngB-Septin-like GTPase superfamily. AIG1/Toc34/Toc159-like paraseptin GTPase family. IAN subfamily. Mostly expressed in pollen. Also detected in lateral roots and radicles.

The polypeptide is Immune-associated nucleotide-binding protein 6 (Arabidopsis thaliana (Mouse-ear cress)).